The chain runs to 257 residues: Zinc transporter ZupT (257 aa).

Helical transmembrane passes span 5 to 25, 32 to 52, and 61 to 81; these read LILT…GVLG, VLAF…LMEM, and GMSP…YFGL. 2 residues coordinate Fe(2+): N120 and E123. E123 and H148 together coordinate Zn(2+). Residues N149, E152, and E181 each contribute to the Fe(2+) site. E152 is a binding site for Zn(2+). The next 3 helical transmembrane spans lie at 182-202, 203-223, and 236-256; these read IFGG…IVMA, AIMA…LMPL, and GVLC…TIGI.

Belongs to the ZIP transporter (TC 2.A.5) family. ZupT subfamily.

It is found in the cell inner membrane. The enzyme catalyses Zn(2+)(in) = Zn(2+)(out). In terms of biological role, mediates zinc uptake. May also transport other divalent cations. This is Zinc transporter ZupT from Salmonella arizonae (strain ATCC BAA-731 / CDC346-86 / RSK2980).